Consider the following 374-residue polypeptide: Translocating chain-associated membrane protein 1 (374 aa).

The Cytoplasmic portion of the chain corresponds to 2–29; the sequence is AIRKKSTKSPPVLSHEFILQNHADIVSC. A helical membrane pass occupies residues 30–50; the sequence is VAMVFLLGLMFEITAKASIIF. Over 51–76 the chain is Lumenal; it reads VTLQYNVTLPATEEQATESTSLYYYG. A glycan (N-linked (GlcNAc...) asparagine) is linked at Asn56. Residues 77–97 traverse the membrane as a helical segment; the sequence is IKDLATVFFYMLVAIIIHAII. Topologically, residues 98–121 are cytoplasmic; sequence QEYVLDKINRRMHFSKTKHSKFNE. A TLC domain is found at 117 to 326; that stretch reads SKFNESGQLS…NFQLRRWREH (210 aa). Residues 122-142 form a helical membrane-spanning segment; sequence SGQLSAFYLFSCIWGTFILIS. At 143–159 the chain is on the lumenal side; that stretch reads ENYISDPTILWRAYPHN. A helical transmembrane segment spans residues 160 to 180; that stretch reads LMTFQMKFFYIAQLAYWFHAF. Over 181-192 the chain is Cytoplasmic; sequence PELYFQKTKKED. A helical transmembrane segment spans residues 193-213; sequence IPRQLVYIGLYLFHIAGAYLL. The Lumenal segment spans residues 214–217; the sequence is NLNH. Residues 218–238 traverse the membrane as a helical segment; the sequence is LGLVLLVLHYFVEFLFHISRL. Topologically, residues 239–251 are cytoplasmic; sequence FYFSDEKYQKGFS. Residues 252 to 272 traverse the membrane as a helical segment; it reads LWAVLFVLGRLLTLILSVLTV. Topologically, residues 273-297 are lumenal; it reads GFGLARAENQKLDFSAGNFNVLAVR. A helical membrane pass occupies residues 298-318; the sequence is IAVLASICITQAFMMWKFINF. Over 319–374 the chain is Cytoplasmic; that stretch reads QLRRWREHSTFQAPVVKKKPTVTKGRSSRKGTENGVNGTVTSNGADSPRNRKEKSS. Basic residues predominate over residues 334 to 347; that stretch reads VKKKPTVTKGRSSR. Positions 334–374 are disordered; the sequence is VKKKPTVTKGRSSRKGTENGVNGTVTSNGADSPRNRKEKSS. Polar residues predominate over residues 352 to 363; that stretch reads NGVNGTVTSNGA. Residue Ser365 is modified to Phosphoserine.

It belongs to the TRAM family. Interacts with SEC61B. May interact with Derlin-1/DERL1. In terms of processing, N-glycosylated.

The protein localises to the endoplasmic reticulum membrane. Its function is as follows. Involved in the translocation of nascent protein chains into or through the endoplasmic reticulum (ER) membrane by facilitating the proper chain positioning at the SEC61 channel. Regulates the exposure of nascent secretory protein chain to the cytosol during translocation into the ER. May affect the phospholipid bilayer in the vicinity of the lateral gate of the SEC61 channel, thereby facilitating ER protein transport. Intimately associates with transmembrane (TM) domain of nascent membrane proteins during the entire integration process into the ER membrane. Associates with the second TM domain of G-protein-coupled receptor opsin/OPSD nascent chain in the ER membrane, which may facilitate its integration into the membrane. Under conditions of ER stress, participates in the disposal of misfolded ER membrane proteins during the unfolded protein response (UPR), an integrated stress response (ISR) pathway, by selectively retrotranslocating misfolded ER-membrane proteins from the ER into the cytosol where they are ubiquitinated and degraded by the proteasome. The sequence is that of Translocating chain-associated membrane protein 1 (TRAM1) from Canis lupus familiaris (Dog).